Here is a 245-residue protein sequence, read N- to C-terminus: 1-(5-phosphoribosyl)-5-[(5-phosphoribosylamino)methylideneamino] imidazole-4-carboxamide isomerase (245 aa).

Asp7 (proton acceptor) is an active-site residue. Asp129 functions as the Proton donor in the catalytic mechanism.

Belongs to the HisA/HisF family.

It is found in the cytoplasm. It carries out the reaction 1-(5-phospho-beta-D-ribosyl)-5-[(5-phospho-beta-D-ribosylamino)methylideneamino]imidazole-4-carboxamide = 5-[(5-phospho-1-deoxy-D-ribulos-1-ylimino)methylamino]-1-(5-phospho-beta-D-ribosyl)imidazole-4-carboxamide. Its pathway is amino-acid biosynthesis; L-histidine biosynthesis; L-histidine from 5-phospho-alpha-D-ribose 1-diphosphate: step 4/9. In Proteus mirabilis (strain HI4320), this protein is 1-(5-phosphoribosyl)-5-[(5-phosphoribosylamino)methylideneamino] imidazole-4-carboxamide isomerase.